The chain runs to 1890 residues: DNA polymerase zeta catalytic subunit (1890 aa).

Composition is skewed to polar residues over residues 508–533 (QENLPDFGSSTKRALPSNPDSQNLRT) and 549–560 (PDSSTSNGASEN). 2 disordered regions span residues 508 to 565 (QENL…FRRY) and 922 to 942 (GDSNIDSEKQPLRDNHNDRGA). Residues 922–940 (GDSNIDSEKQPLRDNHNDR) are compositionally biased toward basic and acidic residues. The Zn(2+) site is built by Cys1789, Cys1792, Cys1803, and Cys1806. A CysA-type zinc finger spans residues 1789–1806 (CILCGEVVQESAQLCNRC). Residues Cys1835, Cys1838, Cys1851, and Cys1856 each coordinate [4Fe-4S] cluster. The CysB motif motif lies at 1835–1856 (CRHCGGGDWVVQSGVKCNSLAC).

It belongs to the DNA polymerase type-B family. As to quaternary structure, forms DNA polymerase zeta with REV7. It depends on [4Fe-4S] cluster as a cofactor. Expressed in roots, leaves and flowers.

It localises to the nucleus. The enzyme catalyses DNA(n) + a 2'-deoxyribonucleoside 5'-triphosphate = DNA(n+1) + diphosphate. Catalytic subunit of the error prone DNA polymerase zeta. Involved in damage-tolerance mechanisms through translesion DNA synthesis. The polypeptide is DNA polymerase zeta catalytic subunit (REV3) (Arabidopsis thaliana (Mouse-ear cress)).